The following is a 151-amino-acid chain: Caveolin-3 (151 aa).

Residues 1–83 are Cytoplasmic-facing; the sequence is MMAEEHTDLE…RLLSTLLGVP (83 aa). Residue Lys-38 forms a Glycyl lysine isopeptide (Lys-Gly) (interchain with G-Cter in SUMO3) linkage. The required for interaction with DAG1 stretch occupies residues 64–114; that stretch reads TFTVSKYWCYRLLSTLLGVPLALLWGFLFACISFCHIWAVVPCIKSYLIEI. The helical intramembrane region spans 84–104; it reads LALLWGFLFACISFCHIWAVV. At 105–151 the chain is on the cytoplasmic side; the sequence is PCIKSYLIEIQCISHIYSLCIRTFCNPLFAALGQVCSSIKVVLRKEV.

The protein belongs to the caveolin family. In terms of assembly, homooligomer. Interacts with DLG1 and KCNA5; forms a ternary complex. Interacts with TRIM72. Interacts with MUSK; may regulate MUSK signaling. Interacts with DAG1 (via its C-terminal); the interaction prevents binding of DAG1 with DMD. Interacts with DYSF. Interacts with POPDC1. Interacts with CAVIN1 and CAVIN2. Interacts with CAVIN4. Post-translationally, sumoylation with SUMO3 by PIAS4 may reduce agonist-induced internalization and desensitization of adrenergic receptor ABRD2. As to expression, expressed predominantly in muscle.

It localises to the golgi apparatus membrane. The protein localises to the cell membrane. It is found in the membrane. Its subcellular location is the caveola. The protein resides in the sarcolemma. May act as a scaffolding protein within caveolar membranes. Interacts directly with G-protein alpha subunits and can functionally regulate their activity. May also regulate voltage-gated potassium channels. Plays a role in the sarcolemma repair mechanism of both skeletal muscle and cardiomyocytes that permits rapid resealing of membranes disrupted by mechanical stress. Mediates the recruitment of CAVIN2 and CAVIN3 proteins to the caveolae. In Homo sapiens (Human), this protein is Caveolin-3 (CAV3).